We begin with the raw amino-acid sequence, 557 residues long: MDQSRVLLWVKAEPFIVGALQIPPPSKFSLHYLRKISTYVRTRTIEGGYPRLSWSTWRHIACGKLQLAKDLAWLYFEMFDSLAMKTPEERLEWSEILSNCMSEDEVEKQRNQLSVDTLQFLLFLHIQQLNKVSLRTSLIGEEWPSPRHRAQSPDLTEKSSCHNKNWNDYSHQAFVCDHLSDLLELLLDPEQLTASFHSTHSSLVSREAVVALSFLIEGTVSGARKIYPLYELALWHPLHAETGFSKASKTFSFYKLEAWLRTCLTGNPFGTSACLKSGKKLAWAHQVEGTTKRAKIACNTHVAPRMHRMVVMSQVYKQTLAKSSDTLVGAHVKIHRCNESFIYLLSPLRSVTIEKCRNSTFVLGPVQTALHLHSCDNVKVIAVCHRLSISSTTGCIFHILTPTRPLILSGNQRVTFAPFHTHYPMLEDHMARTGLATVPNYWDNPMIVCRENSSPSVFRLLPPCEFYVFIIPFEMEGDTTEIPGGLPSAYQKALSQRKKKIQVWQKTVKEARLTKDQRKQFQVLVENKFYEWLINTGHRQQLDSLVPPAAGSKQAAG.

The C-CAP/cofactor C-like domain maps to 290 to 435 (TTKRAKIACN…LEDHMARTGL (146 aa)).

The protein belongs to the TBCC family.

It localises to the cytoplasm. It is found in the cytoskeleton. The protein localises to the microtubule organizing center. Its subcellular location is the centrosome. The protein resides in the spindle pole. In terms of biological role, plays a role in the regulation of centrosome and Golgi apparatus positioning, with consequences on cell shape and cell migration. The chain is TBCC domain-containing protein 1 (TBCCD1) from Bos taurus (Bovine).